Here is a 215-residue protein sequence, read N- to C-terminus: UPF0502 protein YceH (215 aa).

Lysine 80 is modified (N6-acetyllysine).

It belongs to the UPF0502 family.

This is UPF0502 protein YceH from Escherichia coli O157:H7.